Consider the following 388-residue polypeptide: Beta-1,4-galactosyltransferase 5 (388 aa).

At 1 to 14 (MRARRGLLRLPRRS) the chain is on the cytoplasmic side. The chain crosses the membrane as a helical; Signal-anchor for type II membrane protein span at residues 15–35 (LLAALFFFSLSSSLLYFVYVA). The Lumenal segment spans residues 36-388 (PGIVNTYLFM…TPELAQVTEY (353 aa)). N-linked (GlcNAc...) asparagine glycans are attached at residues Asn77, Asn81, Asn90, and Asn128. A disulfide bond links Cys114 and Cys158. Residues 169 to 173 (PFRNR), 208 to 210 (FNR), 235 to 236 (VD), Tyr264, and Trp296 each bind UDP-alpha-D-galactose. Residues Cys229 and Cys248 are joined by a disulfide bond. Asp236 contacts Mn(2+). Residue 298 to 301 (GEDD) participates in N-acetyl-D-glucosamine binding. Mn(2+) is bound at residue His329. 329 to 330 (HH) provides a ligand contact to UDP-alpha-D-galactose. Arg340 lines the N-acetyl-D-glucosamine pocket. 3 N-linked (GlcNAc...) asparagine glycosylation sites follow: Asn360, Asn364, and Asn373.

It belongs to the glycosyltransferase 7 family. Requires Mn(2+) as cofactor. In terms of tissue distribution, highest levels in heart, brain, liver and kidney with lower levels in spleen, lung and testis.

Its subcellular location is the golgi apparatus. It is found in the golgi stack membrane. It catalyses the reaction a beta-D-glucosyl-(1&lt;-&gt;1')-N-acylsphing-4-enine + UDP-alpha-D-galactose = a beta-D-Gal-(1-&gt;4)-beta-D-Glc-(1&lt;-&gt;1)-Cer(d18:1(4E)) + UDP + H(+). It functions in the pathway protein modification; protein glycosylation. The protein operates within sphingolipid metabolism. In terms of biological role, catalyzes the synthesis of lactosylceramide (LacCer) via the transfer of galactose from UDP-galactose to glucosylceramide (GlcCer). LacCer is the starting point in the biosynthesis of all gangliosides (membrane-bound glycosphingolipids) which play pivotal roles in the CNS including neuronal maturation and axonal and myelin formation. Plays a role in the glycosylation of BMPR1A and regulation of its protein stability. Essential for extraembryonic development during early embryogenesis. In Mus musculus (Mouse), this protein is Beta-1,4-galactosyltransferase 5.